We begin with the raw amino-acid sequence, 242 residues long: MTLHRAISPAVAVRRLSRAFGDRPVLHDITLNIPSGQFVALLGESGSGKTTLLRALAGLDDDARQSGSYSVPKNVSVLFQDARLLPWLSVIDNLTLGLRRQDAVQAAQSMLDSVGIGDKARAYPATLSGGQKQRAALARSLLRNPDLLLADEPFGALDALTRLKMHDLLLRLVERSRPTIVLVTHDVDEAVLLADRILVLRDGVIAEDHRVTVPHPRRPSHPDFEDLRRRLLRSLGVETEHI.

In terms of domain architecture, ABC transporter spans Val11–Leu227. Residue Gly43 to Thr50 coordinates ATP.

This sequence belongs to the ABC transporter superfamily. Aliphatic sulfonates importer (TC 3.A.1.17.2) family. In terms of assembly, the complex is composed of two ATP-binding proteins (SsuB), two transmembrane proteins (SsuC) and a solute-binding protein (SsuA).

It localises to the cell inner membrane. The enzyme catalyses ATP + H2O + aliphatic sulfonate-[sulfonate-binding protein]Side 1 = ADP + phosphate + aliphatic sulfonateSide 2 + [sulfonate-binding protein]Side 1.. Part of the ABC transporter complex SsuABC involved in aliphatic sulfonates import. Responsible for energy coupling to the transport system. This chain is Aliphatic sulfonates import ATP-binding protein SsuB 1, found in Paracoccus denitrificans (strain Pd 1222).